Here is a 541-residue protein sequence, read N- to C-terminus: Glucose-6-phosphate isomerase (541 aa).

Catalysis depends on glutamate 353, which acts as the Proton donor. Active-site residues include histidine 384 and lysine 504.

This sequence belongs to the GPI family.

It localises to the cytoplasm. The catalysed reaction is alpha-D-glucose 6-phosphate = beta-D-fructose 6-phosphate. The protein operates within carbohydrate biosynthesis; gluconeogenesis. It functions in the pathway carbohydrate degradation; glycolysis; D-glyceraldehyde 3-phosphate and glycerone phosphate from D-glucose: step 2/4. Functionally, catalyzes the reversible isomerization of glucose-6-phosphate to fructose-6-phosphate. The chain is Glucose-6-phosphate isomerase from Deinococcus radiodurans (strain ATCC 13939 / DSM 20539 / JCM 16871 / CCUG 27074 / LMG 4051 / NBRC 15346 / NCIMB 9279 / VKM B-1422 / R1).